A 130-amino-acid chain; its full sequence is RutC family protein in leuC 5'region (130 aa).

Belongs to the RutC family.

The sequence is that of RutC family protein in leuC 5'region from Leuconostoc mesenteroides subsp. cremoris.